A 335-amino-acid chain; its full sequence is Arylacetonitrilase (335 aa).

Positions 6–291 (LKVAITQAQP…EGIVYADLDM (286 aa)) constitute a CN hydrolase domain. The active-site Proton acceptor is Glu46. Lys127 is a catalytic residue. The active-site Nucleophile is the Cys168.

It belongs to the carbon-nitrogen hydrolase superfamily. Nitrilase family.

It catalyses the reaction a nitrile + 2 H2O = a carboxylate + NH4(+). The catalysed reaction is 4-chlorophenylacetonitrile + 2 H2O = 4-chlorophenylacetate + NH4(+). In terms of biological role, nitrilase that hydrolyzes preferentially phenylacetonitrile, (R,S)-mandelonitrile, and 3-indolylacetonitrile. The sequence is that of Arylacetonitrilase from Arthroderma benhamiae (strain ATCC MYA-4681 / CBS 112371) (Trichophyton mentagrophytes).